We begin with the raw amino-acid sequence, 110 residues long: Small ribosomal subunit protein mS33 (110 aa).

The segment covering 84 to 95 has biased composition (basic residues); that stretch reads KRRGKGAPKKMK. The tract at residues 84–110 is disordered; the sequence is KRRGKGAPKKMKKDAAATAKGKGKKKK.

Belongs to the mitochondrion-specific ribosomal protein mS33 family. In terms of assembly, component of the mitochondrial small ribosomal subunit (mt-SSU). Mature yeast 74S mitochondrial ribosomes consist of a small (37S) and a large (54S) subunit. The 37S small subunit contains a 15S ribosomal RNA (15S mt-rRNA) and 34 different proteins. The 54S large subunit contains a 21S rRNA (21S mt-rRNA) and 46 different proteins.

The protein localises to the mitochondrion. Component of the mitochondrial ribosome (mitoribosome), a dedicated translation machinery responsible for the synthesis of mitochondrial genome-encoded proteins, including at least some of the essential transmembrane subunits of the mitochondrial respiratory chain. The mitoribosomes are attached to the mitochondrial inner membrane and translation products are cotranslationally integrated into the membrane. This Saccharomyces cerevisiae (strain ATCC 204508 / S288c) (Baker's yeast) protein is Small ribosomal subunit protein mS33 (RSM27).